A 621-amino-acid polypeptide reads, in one-letter code: Putative acyltransferase plsB1 (621 aa).

Positions 123–128 match the HXXXXD motif motif; the sequence is HRSYLD.

It belongs to the GPAT/DAPAT family.

The protein localises to the cell membrane. The polypeptide is Putative acyltransferase plsB1 (plsB1) (Mycobacterium bovis (strain ATCC BAA-935 / AF2122/97)).